The primary structure comprises 241 residues: Major microneme antigen (241 aa).

The first 34 residues, 1–34 (MTLPIHFPRCVLYGMASAVWSILFLHILVGDTMS), serve as a signal peptide directing secretion. A propeptide spanning residues 35–103 (AADALSWSGG…ATGRGPSFVH (69 aa)) is cleaved from the precursor. A compositionally biased stretch (basic and acidic residues) spans 64–83 (GKELEQQHGGEEQQMQRDTK). The tract at residues 64-90 (GKELEQQHGGEEQQMQRDTKPAAFSNP) is disordered. PAN domains lie at 112–181 (CFPH…PRSC) and 185–241 (CTDN…VERA). Cystine bridges form between C112-C181, C137-C159, C141-C147, C185-C189, C210-C230, and C214-C220. S121 contacts a carbohydrate. A carbohydrate is bound by residues K162, Y169, and D174.

It belongs to the microneme antigen family. As to quaternary structure, homodimer or heterodimer of major microneme antigen and microneme antigen. In terms of processing, contains six disulfide bonds.

Its subcellular location is the cytoplasmic vesicle. It localises to the secretory vesicle. It is found in the microneme. Its function is as follows. Galactose-binding lectin. Plays a role in adhesion to the host cell. Has a potential role in invasion of host cells. This is Major microneme antigen from Sarcocystis muris.